Reading from the N-terminus, the 366-residue chain is Chorismate synthase (366 aa).

Residues Arg-48 and Arg-54 each coordinate NADP(+). FMN-binding positions include 125–127 (RSS), 238–239 (NA), Gly-278, 293–297 (KPTSS), and Arg-319.

Belongs to the chorismate synthase family. Homotetramer. It depends on FMNH2 as a cofactor.

It catalyses the reaction 5-O-(1-carboxyvinyl)-3-phosphoshikimate = chorismate + phosphate. Its pathway is metabolic intermediate biosynthesis; chorismate biosynthesis; chorismate from D-erythrose 4-phosphate and phosphoenolpyruvate: step 7/7. Catalyzes the anti-1,4-elimination of the C-3 phosphate and the C-6 proR hydrogen from 5-enolpyruvylshikimate-3-phosphate (EPSP) to yield chorismate, which is the branch point compound that serves as the starting substrate for the three terminal pathways of aromatic amino acid biosynthesis. This reaction introduces a second double bond into the aromatic ring system. This Burkholderia ambifaria (strain MC40-6) protein is Chorismate synthase.